Consider the following 510-residue polypeptide: Cytochrome P450 monooxygenase ptmK (510 aa).

The chain crosses the membrane as a helical span at residues 2–22 (IIVTFFWVGIVLSAIWTFYKV). Residues asparagine 313, asparagine 408, and asparagine 443 are each glycosylated (N-linked (GlcNAc...) asparagine). Position 456 (cysteine 456) interacts with heme.

The protein belongs to the cytochrome P450 family. The cofactor is heme.

Its subcellular location is the membrane. Its pathway is secondary metabolite biosynthesis. Cytochrome P450 monooxygenase; part of the gene cluster that mediates the biosynthesis of the indole diterpenes penitrems. The geranylgeranyl diphosphate (GGPP) synthase ptmG catalyzes the first step in penitrem biosynthesis via conversion of farnesyl pyrophosphate and isopentyl pyrophosphate into geranylgeranyl pyrophosphate (GGPP). Condensation of indole-3-glycerol phosphate with GGPP by the prenyl transferase ptmC then forms 3-geranylgeranylindole (3-GGI). Epoxidation by the FAD-dependent monooxygenase ptmM leads to a epoxidized-GGI that is substrate of the terpene cyclase ptmB for cyclization to yield paspaline. Paspaline is subsequently converted to 13-desoxypaxilline by the cytochrome P450 monooxygenase ptmP, the latter being then converted to paxilline by the cytochrome P450 monooxygenase ptmQ. Paxilline is converted to beta-paxitriol via C-10 ketoreduction by the short-chain dehydrogenase ptmH which can be monoprenylated at the C-20 by the indole diterpene prenyltransferase ptmD. A two-step elimination (acetylation and elimination) process performed by the O-acetyltransferase ptmV and ptmI leads to the production of the prenylated form of penijanthine. The FAD-linked oxidoreductase ptmO then converts the prenylated form of penijanthine into PC-M5 which is in turn transformed into PC-M4 by the aromatic dimethylallyltransferase ptmE. Five sequential oxidative transformations performed by the cytochrome P450 monooxygenases ptmK, ptmU, ptmL, ptmN and ptmJ yield the various penitrem compounds. PtmK, ptmU and ptmM are involved in the formation of the key bicyclic ring of penitrem C via the formation of the intermediates secopenitrem D and penitrem D. PtmL catalyzes the epoxidation of penitrem D and C to yield penitrem B and F, respectively. PtmJ catalyzes the last benzylic hydroxylation to convert penitrem B to prenitrem E and penitrem F to penitrem A. The sequence is that of Cytochrome P450 monooxygenase ptmK from Penicillium ochrochloron.